Consider the following 490-residue polypeptide: MEQKPSKVECGSDPEENSARSPDGKRKRKNGQCSLKTSMSGYIPSYLDKDEQCVVCGDKATGYHYRCITCEGCKGFFRRTIQKNLHPTYSCKYDSCCVIDKITRNQCQLCRFKKCIAVGMAMDLVLDDSKRVAKRKLIEQNRERRRKEEMIRSLQQRPEPTPEEWDLIHIATEAHRSTNAQGSHWKQRRKFLPDDIGQSPIVSMPDGDKVDLEAFSEFTKIITPAITRVVDFAKKLPMFSELPCEDQIILLKGCCMEIMSLRAAVRYDPESDTLTLSGEMAVKREQLKNGGLGVVSDAIFELGKSLSAFNLDDTEVALLQAVLLMSTDRSGLLCVDKIEKSQEAYLLAFEHYVNHRKHNIPHFWPKLLMKEREVQSSILYKGAAAEGRPGGSLGVHPEGQQLLGMHVVQGPQVRQLEQQLGEAGSLQGPVLQHQSPKSPQQRLLELLHRSGILHARAVCGEDDSSEADSPSSSEEEPEVCEDLAGNAASP.

Residues 1–32 (MEQKPSKVECGSDPEENSARSPDGKRKRKNGQ) form a disordered region. The interval 1–52 (MEQKPSKVECGSDPEENSARSPDGKRKRKNGQCSLKTSMSGYIPSYLDKDEQ) is modulating. Residues C53, C56, C70, C73, C91, C97, C107, and C110 each coordinate Zn(2+). 2 consecutive NR C4-type zinc fingers follow at residues 53 to 73 (CVVC…CEGC) and 91 to 115 (CKYD…FKKC). Residues 53–127 (CVVCGDKATG…VGMAMDLVLD (75 aa)) constitute a DNA-binding region (nuclear receptor). The region spanning 163-407 (EEWDLIHIAT…EGQQLLGMHV (245 aa)) is the NR LBD domain. Residues R228 and S277 each coordinate 3,3',5-triiodo-L-thyronine. Residues 457–490 (AVCGEDDSSEADSPSSSEEEPEVCEDLAGNAASP) form a disordered region.

Belongs to the nuclear hormone receptor family. NR1 subfamily. In terms of assembly, binds DNA as a dimer; homodimer and heterodimer with RXRB. Interacts with NCOA3 and NCOA6 coactivators, leading to a strong increase of transcription of target genes. Probably interacts with SFPQ. Interacts with C1D. Interacts with AKAP13. Interacts with TP53INP2. Interacts with PER2. Isoform alpha-2 and isoform alpha-1 interact with TACC1, but the interaction with alpha-1 is weaker. The interaction with isoform alpha-1, but not alpha-2, is decreased in the presence of thyroid hormone T3.

Its subcellular location is the nucleus. It is found in the cytoplasm. Its function is as follows. Nuclear hormone receptor that can act as a repressor or activator of transcription. High affinity receptor for thyroid hormones, including triiodothyronine and thyroxine. In terms of biological role, does not bind thyroid hormone and functions as a weak dominant negative inhibitor of thyroid hormone action. This chain is Thyroid hormone receptor alpha (THRA), found in Homo sapiens (Human).